Reading from the N-terminus, the 341-residue chain is tRNA N6-adenosine threonylcarbamoyltransferase (341 aa).

Positions 117 and 121 each coordinate Fe cation. Substrate-binding positions include Val139 to Gly143, Asp172, Gly185, Asp189, and Asn278. Asp307 is a Fe cation binding site.

Belongs to the KAE1 / TsaD family. It depends on Fe(2+) as a cofactor.

Its subcellular location is the cytoplasm. It catalyses the reaction L-threonylcarbamoyladenylate + adenosine(37) in tRNA = N(6)-L-threonylcarbamoyladenosine(37) in tRNA + AMP + H(+). Required for the formation of a threonylcarbamoyl group on adenosine at position 37 (t(6)A37) in tRNAs that read codons beginning with adenine. Is involved in the transfer of the threonylcarbamoyl moiety of threonylcarbamoyl-AMP (TC-AMP) to the N6 group of A37, together with TsaE and TsaB. TsaD likely plays a direct catalytic role in this reaction. This chain is tRNA N6-adenosine threonylcarbamoyltransferase, found in Bacillus licheniformis (strain ATCC 14580 / DSM 13 / JCM 2505 / CCUG 7422 / NBRC 12200 / NCIMB 9375 / NCTC 10341 / NRRL NRS-1264 / Gibson 46).